We begin with the raw amino-acid sequence, 112 residues long: CRISPR-associated endoribonuclease Cas2 2 (112 aa).

Asp15 contacts Mg(2+).

It belongs to the CRISPR-associated endoribonuclease Cas2 protein family. As to quaternary structure, homodimer, forms a heterotetramer with a Cas1 homodimer. Mg(2+) serves as cofactor.

Functionally, CRISPR (clustered regularly interspaced short palindromic repeat), is an adaptive immune system that provides protection against mobile genetic elements (viruses, transposable elements and conjugative plasmids). CRISPR clusters contain sequences complementary to antecedent mobile elements and target invading nucleic acids. CRISPR clusters are transcribed and processed into CRISPR RNA (crRNA). Functions as a ssRNA-specific endoribonuclease. Involved in the integration of spacer DNA into the CRISPR cassette. This Rhodospirillum rubrum (strain ATCC 11170 / ATH 1.1.1 / DSM 467 / LMG 4362 / NCIMB 8255 / S1) protein is CRISPR-associated endoribonuclease Cas2 2.